The chain runs to 231 residues: LexA repressor (231 aa).

A DNA-binding region (H-T-H motif) is located at residues 28 to 48 (IREIGEALDIRSTNGVNDHLK). Catalysis depends on for autocatalytic cleavage activity residues serine 149 and lysine 186.

It belongs to the peptidase S24 family. Homodimer.

The enzyme catalyses Hydrolysis of Ala-|-Gly bond in repressor LexA.. Its function is as follows. Represses a number of genes involved in the response to DNA damage (SOS response), including recA and lexA. In the presence of single-stranded DNA, RecA interacts with LexA causing an autocatalytic cleavage which disrupts the DNA-binding part of LexA, leading to derepression of the SOS regulon and eventually DNA repair. In Anaeromyxobacter sp. (strain Fw109-5), this protein is LexA repressor.